Consider the following 187-residue polypeptide: Benzene 1,2-dioxygenase subunit beta (187 aa).

It belongs to the bacterial ring-hydroxylating dioxygenase beta subunit family. In terms of assembly, this dioxygenase system consists of four proteins: the two subunits of the hydroxylase component (BedC1 and BedC2), a ferredoxin (BedB) and a ferredoxin reductase (BedA).

It carries out the reaction benzene + NADH + O2 + H(+) = cis-1,2-dihydrobenzene-1,2-diol + NAD(+). The protein operates within aromatic compound metabolism; benzene degradation; catechol from benzene: step 1/2. The beta subunit may be responsible for the substrate specificity of the enzyme. The sequence is that of Benzene 1,2-dioxygenase subunit beta (bedC2) from Pseudomonas putida (Arthrobacter siderocapsulatus).